A 49-amino-acid chain; its full sequence is Large ribosomal subunit protein bL33 (49 aa).

It belongs to the bacterial ribosomal protein bL33 family.

The sequence is that of Large ribosomal subunit protein bL33 from Lactobacillus acidophilus (strain ATCC 700396 / NCK56 / N2 / NCFM).